We begin with the raw amino-acid sequence, 426 residues long: Tetracenomycin polyketide synthase ketoacyl synthase alpha subunit (426 aa).

Residues 6–420 (EKRVVITGIG…GFQSAAVLAR (415 aa)) form the Ketosynthase family 3 (KS3) domain. Active-site for beta-ketoacyl synthase activity residues include cysteine 173, histidine 313, and histidine 350.

Belongs to the thiolase-like superfamily. Beta-ketoacyl-ACP synthases family. In terms of assembly, the tetracenomycin polyketide synthase (TCM PKS) is composed of a ketosynthase complex (TcmKL), an acyl carrier protein (TcmM), a cyclase (TcmN) and a probable second cyclase (TcmJ). TcmK and TcmL form a heterodimeric complex.

The catalysed reaction is 10 malonyl-CoA + 8 H(+) = tetracenomycin F2 + 10 CO2 + 10 CoA + 2 H2O. It functions in the pathway antibiotic biosynthesis; tetracenomycin C biosynthesis. In terms of biological role, involved in the biosynthesis of tetracenomycin C (TCM C). Part of a type II polyketide synthase (PKS) that catalyzes the synthesis of tetracenomycin F2 (TCM F2), a precursor of TCM C, from malonyl-CoA. TcmK and TcmL form a heterodimeric alpha-beta complex that catalyzes the condensation reactions between the growing acyl-enzyme chain and the malonyl-CoA extender units. The sequence is that of Tetracenomycin polyketide synthase ketoacyl synthase alpha subunit from Streptomyces glaucescens.